The sequence spans 344 residues: Protein BREVIS RADIX (344 aa).

The 56-residue stretch at 139-194 (KEWMAQVEPGVHITFASLPTGGNDLKRIRFSREMFDKWQAQRWWGENYDKIVELYN) folds into the BRX 1 domain. The segment at 203 to 286 (LQTPARSDDQ…DPPSMSNASE (84 aa)) is disordered. A compositionally biased stretch (basic and acidic residues) spans 223–233 (DSARESKDWTP). The span at 248 to 264 (YGGSSNYGPGSYHGGPP) shows a compositional bias: low complexity. One can recognise a BRX 2 domain in the interval 289 to 344 (AEWIEEDEPGVYITIRQLSDGTRELRRVRFSRERFGEVHAKTWWEQNRERIQTQYL).

It belongs to the BRX family. Homodimer and heterodimer with BRXL1. Interacts with NGA1 and ARF5. Expressed in the developing protophloem up to the elongation zone in root meristem of young seedlings, in the columella and the phloem vasculature throughout the root and in the phloem vasculature in the shoot. Detected in the shoot meristem and in primordia. Low expression in stomata. Confined to sieve element precursor cells and to protophloem.

Its subcellular location is the nucleus. It is found in the cell membrane. In terms of biological role, acts as a regulator of cell proliferation and elongation in the root and shoot. Regulates roots architecture and primary root protophloem differentiation. BRX, BAM3, and CLE45 act together to regulate the transition of protophloem cells from proliferation to differentiation, thus impinging on postembryonic growth capacity of the root meristem. Probable transcription regulator. Regulated by the auxin response factor ARF5. Polarly localized in vascular cells and subject to endocytic recycling. Required for CPD expression and for correct nuclear auxin response. Mediates cross-talk between the auxin and brassinosteroid pathways. BRX is a target for auxin-induced, proteasome-mediated degradation. The chain is Protein BREVIS RADIX from Arabidopsis thaliana (Mouse-ear cress).